Reading from the N-terminus, the 119-residue chain is UPF0102 protein Pmen_0910 (119 aa).

Belongs to the UPF0102 family.

In Ectopseudomonas mendocina (strain ymp) (Pseudomonas mendocina), this protein is UPF0102 protein Pmen_0910.